Here is a 328-residue protein sequence, read N- to C-terminus: 5,10-methylenetetrahydromethanopterin reductase (328 aa).

It belongs to the mer family.

The protein resides in the cytoplasm. The catalysed reaction is 5-methyl-5,6,7,8-tetrahydromethanopterin + oxidized coenzyme F420-(gamma-L-Glu)(n) + H(+) = 5,10-methylenetetrahydromethanopterin + reduced coenzyme F420-(gamma-L-Glu)(n). Its pathway is one-carbon metabolism; methanogenesis from CO(2); methyl-coenzyme M from 5,10-methylene-5,6,7,8-tetrahydromethanopterin: step 1/2. Catalyzes the reversible reduction of methylene-H(4)MPT to methyl-H(4)MPT. This chain is 5,10-methylenetetrahydromethanopterin reductase, found in Methanosarcina mazei (strain ATCC BAA-159 / DSM 3647 / Goe1 / Go1 / JCM 11833 / OCM 88) (Methanosarcina frisia).